The chain runs to 121 residues: Large ribosomal subunit protein bL12 (121 aa).

The protein belongs to the bacterial ribosomal protein bL12 family. Homodimer. Part of the ribosomal stalk of the 50S ribosomal subunit. Forms a multimeric L10(L12)X complex, where L10 forms an elongated spine to which 2 to 4 L12 dimers bind in a sequential fashion. Binds GTP-bound translation factors.

In terms of biological role, forms part of the ribosomal stalk which helps the ribosome interact with GTP-bound translation factors. Is thus essential for accurate translation. This chain is Large ribosomal subunit protein bL12, found in Lactococcus lactis subsp. lactis (strain IL1403) (Streptococcus lactis).